We begin with the raw amino-acid sequence, 96 residues long: Phosphoribosyl-ATP pyrophosphatase (96 aa).

The protein belongs to the PRA-PH family.

The protein localises to the cytoplasm. The catalysed reaction is 1-(5-phospho-beta-D-ribosyl)-ATP + H2O = 1-(5-phospho-beta-D-ribosyl)-5'-AMP + diphosphate + H(+). The protein operates within amino-acid biosynthesis; L-histidine biosynthesis; L-histidine from 5-phospho-alpha-D-ribose 1-diphosphate: step 2/9. The protein is Phosphoribosyl-ATP pyrophosphatase of Methanococcus vannielii (strain ATCC 35089 / DSM 1224 / JCM 13029 / OCM 148 / SB).